A 413-amino-acid polypeptide reads, in one-letter code: Serine hydroxymethyltransferase (413 aa).

(6S)-5,6,7,8-tetrahydrofolate contacts are provided by residues Leu-119 and 123–125; that span reads GHL. Lys-228 is subject to N6-(pyridoxal phosphate)lysine. 351 to 353 contributes to the (6S)-5,6,7,8-tetrahydrofolate binding site; it reads SPF.

This sequence belongs to the SHMT family. In terms of assembly, homodimer. The cofactor is pyridoxal 5'-phosphate.

It localises to the cytoplasm. The catalysed reaction is (6R)-5,10-methylene-5,6,7,8-tetrahydrofolate + glycine + H2O = (6S)-5,6,7,8-tetrahydrofolate + L-serine. Its pathway is one-carbon metabolism; tetrahydrofolate interconversion. It functions in the pathway amino-acid biosynthesis; glycine biosynthesis; glycine from L-serine: step 1/1. Functionally, catalyzes the reversible interconversion of serine and glycine with tetrahydrofolate (THF) serving as the one-carbon carrier. This reaction serves as the major source of one-carbon groups required for the biosynthesis of purines, thymidylate, methionine, and other important biomolecules. Also exhibits THF-independent aldolase activity toward beta-hydroxyamino acids, producing glycine and aldehydes, via a retro-aldol mechanism. The sequence is that of Serine hydroxymethyltransferase from Clostridium botulinum (strain Okra / Type B1).